Consider the following 394-residue polypeptide: Phosphoglycerate kinase (394 aa).

Substrate-binding positions include 21 to 23, Arg-36, 59 to 62, Arg-118, and Arg-151; these read DFN and HLGR. Ser-183 bears the Phosphoserine mark. Positions 201 and 292 each coordinate ATP. At Thr-299 the chain carries Phosphothreonine. ATP is bound by residues Glu-323 and 350-353; that span reads GGDS.

Belongs to the phosphoglycerate kinase family. As to quaternary structure, monomer.

It is found in the cytoplasm. The catalysed reaction is (2R)-3-phosphoglycerate + ATP = (2R)-3-phospho-glyceroyl phosphate + ADP. The protein operates within carbohydrate degradation; glycolysis; pyruvate from D-glyceraldehyde 3-phosphate: step 2/5. The sequence is that of Phosphoglycerate kinase from Bacillus cereus (strain G9842).